A 107-amino-acid chain; its full sequence is UPF0060 membrane protein ZMO1566 (107 aa).

The next 4 membrane-spanning stretches (helical) occupy residues 4–24, 29–49, 55–75, and 84–104; these read LLYI…WAWI, SPLW…LLTF, AGKA…LWSW, and HWDL…LWMP.

This sequence belongs to the UPF0060 family.

The protein localises to the cell inner membrane. This chain is UPF0060 membrane protein ZMO1566, found in Zymomonas mobilis subsp. mobilis (strain ATCC 31821 / ZM4 / CP4).